Here is a 301-residue protein sequence, read N- to C-terminus: Sulfate adenylyltransferase subunit 2 (301 aa).

This sequence belongs to the PAPS reductase family. CysD subfamily. As to quaternary structure, heterodimer composed of CysD, the smaller subunit, and CysN.

It catalyses the reaction sulfate + ATP + H(+) = adenosine 5'-phosphosulfate + diphosphate. It functions in the pathway sulfur metabolism; hydrogen sulfide biosynthesis; sulfite from sulfate: step 1/3. With CysN forms the ATP sulfurylase (ATPS) that catalyzes the adenylation of sulfate producing adenosine 5'-phosphosulfate (APS) and diphosphate, the first enzymatic step in sulfur assimilation pathway. APS synthesis involves the formation of a high-energy phosphoric-sulfuric acid anhydride bond driven by GTP hydrolysis by CysN coupled to ATP hydrolysis by CysD. In Trichlorobacter lovleyi (strain ATCC BAA-1151 / DSM 17278 / SZ) (Geobacter lovleyi), this protein is Sulfate adenylyltransferase subunit 2.